The chain runs to 614 residues: Syringomycin synthase SyrB1 (614 aa).

Residues 535-610 (KGLSEQEHFV…VLADHITRSL (76 aa)) form the Carrier domain. Residue Ser-570 is modified to O-(pantetheine 4'-phosphoryl)serine.

This sequence belongs to the ATP-dependent AMP-binding enzyme family. It depends on pantetheine 4'-phosphate as a cofactor.

The enzyme catalyses holo-[peptidyl-carrier protein] + L-threonine + ATP = L-threonyl-[peptidyl-carrier protein] + AMP + diphosphate. Involved in the biosynthesis of syringomycin E, a cyclic lipodepsinonapeptide toxin with phytotoxic activity. Specifically adenylates L-threonine and loads it onto its peptidyl carrier domain, via a thioester linkage to the phosphopanthetheine moiety. Is highly specific for L-threonine. In Pseudomonas syringae pv. syringae, this protein is Syringomycin synthase SyrB1.